The chain runs to 213 residues: MGRNKKKKRDGDDRRPRLVLSFDEEKRREYLTGFHKRKVERKKAAIEEIKQRLKEEQRKLREERHQEYLKMLAEREEALEEADELDRLVTAKTESVQYDHPNHTVTATTISDLDLSGARLLGLTPPEGGAGDESEEEASSTEKPTKALPRKSRDPLLSQRISSLTASLHAHSRKKVKRKHPRQAQDSKKPPRATRTSKAQRRRLTGKAQHSRE.

A coiled-coil region spans residues 33–96; the sequence is GFHKRKVERK…RLVTAKTESV (64 aa). The segment at 109–213 is disordered; it reads TISDLDLSGA…LTGKAQHSRE (105 aa). Residues 130–139 show a composition bias toward acidic residues; sequence AGDESEEEAS. Positions 170-182 are enriched in basic residues; that stretch reads AHSRKKVKRKHPR.

The protein belongs to the RRP17 family. As to quaternary structure, interacts with KIAA1191.

The protein resides in the nucleus. Its subcellular location is the nucleolus. The protein localises to the cytoplasm. Multifunctional RNA binding protein that plays a role in RNA metabolism and DNA maintenance. Participates in the resolution of DNA stress and the maintenance of genome integrity by localizing to sites of DNA insults. Also plays a role in proper nucleolar organization by limiting nucleolar size and regulating nucleolar number. Mechanistically, regulates the nucleolar levels of fibrillarin and nucleolin, two key players in pre-rRNA processing and ribosome assembly. This Pongo abelii (Sumatran orangutan) protein is Nucleolar protein 12 (NOL12).